Reading from the N-terminus, the 454-residue chain is Pup--protein ligase (454 aa).

Glu9 provides a ligand contact to Mg(2+). Residue Arg53 coordinates ATP. Tyr55 is a Mg(2+) binding site. The active-site Proton acceptor is Asp57. Glu63 provides a ligand contact to Mg(2+). Residues Thr66 and Trp420 each contribute to the ATP site.

The protein belongs to the Pup ligase/Pup deamidase family. Pup-conjugating enzyme subfamily.

It carries out the reaction ATP + [prokaryotic ubiquitin-like protein]-L-glutamate + [protein]-L-lysine = ADP + phosphate + N(6)-([prokaryotic ubiquitin-like protein]-gamma-L-glutamyl)-[protein]-L-lysine.. It participates in protein degradation; proteasomal Pup-dependent pathway. It functions in the pathway protein modification; protein pupylation. Catalyzes the covalent attachment of the prokaryotic ubiquitin-like protein modifier Pup to the proteasomal substrate proteins, thereby targeting them for proteasomal degradation. This tagging system is termed pupylation. The ligation reaction involves the side-chain carboxylate of the C-terminal glutamate of Pup and the side-chain amino group of a substrate lysine. This is Pup--protein ligase from Paenarthrobacter aurescens (strain TC1).